A 186-amino-acid chain; its full sequence is Protein Syd (186 aa).

Belongs to the Syd family.

It localises to the cell inner membrane. Interacts with the SecY protein in vivo. May bind preferentially to an uncomplexed state of SecY, thus functioning either as a chelating agent for excess SecY in the cell or as a regulatory factor that negatively controls the translocase function. The protein is Protein Syd of Erwinia tasmaniensis (strain DSM 17950 / CFBP 7177 / CIP 109463 / NCPPB 4357 / Et1/99).